The chain runs to 692 residues: Small conductance calcium-activated potassium channel-like protein 3 (692 aa).

A helical membrane pass occupies residues 270–290 (SLYLALFGVILMLVESEITAE). Residues 313-333 (TIALLYHIILYHLNDIVLELV) traverse the membrane as a helical segment. The helical transmembrane segment at 349–369 (VIQFCIEFICCGICPLPGSGE) threads the bilayer. Residues 401–421 (VILSCFMLCRSYLFARFMVLH) form a helical membrane-spanning segment. A helical transmembrane segment spans residues 455–475 (PVLFLTTFTFIFWIIMSWMFV). An intramembrane region (pore-forming) is located at residues 492–512 (YSNSLWFIAITFMLNGYGDIV). A helical membrane pass occupies residues 520-540 (FIAIFVGVVGAVISSILIAVI). The span at 667-683 (HSTPNVPHLQGLTSSPV) shows a compositional bias: polar residues. The interval 667 to 692 (HSTPNVPHLQGLTSSPVPSDRYDNRF) is disordered.

Belongs to the potassium channel KCNN family. SK subfamily. Heterooligomer.

The protein resides in the membrane. Its function is as follows. Forms a voltage-independent potassium channel activated by intracellular calcium. This is Small conductance calcium-activated potassium channel-like protein 3 (kcnl-3) from Caenorhabditis elegans.